We begin with the raw amino-acid sequence, 407 residues long: tRNA (guanine(9)-N1)-methyltransferase (407 aa).

A compositionally biased stretch (basic and acidic residues) spans 1–19 (MDLDPAHKPSQAEETKEQG). Disordered regions lie at residues 1–105 (MDLD…VRKR) and 220–256 (ENMI…PRPE). Residues 20–32 (NEQGQVEQNQAQQ) show a composition bias toward low complexity. Residues 91–103 (LKRKDSRIARKVR) show a composition bias toward basic residues. Residues 120-356 (ANKQKPPSVN…SVIPKRKGGK (237 aa)) enclose the SAM-dependent MTase TRM10-type domain. S-adenosyl-L-methionine contacts are provided by residues 263-264 (LS), Gly-283, 287-291 (DKNRE), Cys-295, Leu-309, and 321-323 (TVL). Asp-287 serves as the catalytic Proton acceptor. Positions 353–407 (KGGKLKEQQGASGETQETEEAEAEDPEEENEETKDPDAEASASKQNTPKVEVTSK) are disordered. Residues 368 to 386 (QETEEAEAEDPEEENEETK) show a composition bias toward acidic residues. Polar residues predominate over residues 394–407 (ASKQNTPKVEVTSK).

Belongs to the class IV-like SAM-binding methyltransferase superfamily. TRM10 family. Monomer.

It localises to the cytoplasm. The protein localises to the nucleus. The enzyme catalyses guanosine(9) in tRNA + S-adenosyl-L-methionine = N(1)-methylguanosine(9) in tRNA + S-adenosyl-L-homocysteine + H(+). Functionally, S-adenosyl-L-methionine-dependent guanine N(1)-methyltransferase that catalyzes the formation of N(1)-methylguanine at position 9 (m1G9) in cytoplasmic tRNA. This Gibberella zeae (strain ATCC MYA-4620 / CBS 123657 / FGSC 9075 / NRRL 31084 / PH-1) (Wheat head blight fungus) protein is tRNA (guanine(9)-N1)-methyltransferase.